Here is a 498-residue protein sequence, read N- to C-terminus: Phenylalanine--tRNA ligase alpha subunit (498 aa).

L-phenylalanine contacts are provided by residues Thr328, 372-374 (QVE), and Tyr412. Glu414 provides a ligand contact to Mg(2+). L-phenylalanine is bound at residue Phe438.

The protein belongs to the class-II aminoacyl-tRNA synthetase family. Phe-tRNA synthetase alpha subunit type 2 subfamily. As to quaternary structure, tetramer of two alpha and two beta subunits. Mg(2+) serves as cofactor.

It localises to the cytoplasm. It catalyses the reaction tRNA(Phe) + L-phenylalanine + ATP = L-phenylalanyl-tRNA(Phe) + AMP + diphosphate + H(+). The chain is Phenylalanine--tRNA ligase alpha subunit from Drosophila melanogaster (Fruit fly).